We begin with the raw amino-acid sequence, 422 residues long: Testin (422 aa).

Residues 92-199 (MILTSPVAAK…GDVKLPKEVE (108 aa)) form the PET domain. The disordered stretch occupies residues 135-165 (QPVAGSEGAQYRKKQLAKQLPAHDQDPSKCH). Basic and acidic residues predominate over residues 155–165 (PAHDQDPSKCH). LIM zinc-binding domains lie at 234–299 (YYCF…SEKP), 300–359 (RCAG…NHAV), and 360–422 (SCQG…KMSS).

The protein belongs to the prickle / espinas / testin family.

The protein localises to the cytoplasm. The protein resides in the cell cortex. Its subcellular location is the cell junction. It is found in the focal adhesion. Its function is as follows. Scaffold protein that may play a role in cell adhesion, cell spreading and in the reorganization of the actin cytoskeleton. May inhibit cell growth. Regulates cranial neural crest migration. Acts together with prickle1 to control axial elongation. This chain is Testin, found in Xenopus tropicalis (Western clawed frog).